Consider the following 544-residue polypeptide: Chaperonin GroEL (544 aa).

Residues 29–32 (TLGP), K50, 86–90 (DGTTT), G415, and D495 contribute to the ATP site.

The protein belongs to the chaperonin (HSP60) family. In terms of assembly, forms a cylinder of 14 subunits composed of two heptameric rings stacked back-to-back. Interacts with the co-chaperonin GroES.

The protein localises to the cytoplasm. It catalyses the reaction ATP + H2O + a folded polypeptide = ADP + phosphate + an unfolded polypeptide.. Its function is as follows. Together with its co-chaperonin GroES, plays an essential role in assisting protein folding. The GroEL-GroES system forms a nano-cage that allows encapsulation of the non-native substrate proteins and provides a physical environment optimized to promote and accelerate protein folding. This chain is Chaperonin GroEL, found in Tannerella forsythia (Bacteroides forsythus).